A 398-amino-acid polypeptide reads, in one-letter code: NADH-quinone oxidoreductase subunit D (398 aa).

It belongs to the complex I 49 kDa subunit family. In terms of assembly, NDH-1 is composed of 14 different subunits. Subunits NuoB, C, D, E, F, and G constitute the peripheral sector of the complex.

Its subcellular location is the cell inner membrane. It catalyses the reaction a quinone + NADH + 5 H(+)(in) = a quinol + NAD(+) + 4 H(+)(out). In terms of biological role, NDH-1 shuttles electrons from NADH, via FMN and iron-sulfur (Fe-S) centers, to quinones in the respiratory chain. The immediate electron acceptor for the enzyme in this species is believed to be ubiquinone. Couples the redox reaction to proton translocation (for every two electrons transferred, four hydrogen ions are translocated across the cytoplasmic membrane), and thus conserves the redox energy in a proton gradient. This is NADH-quinone oxidoreductase subunit D from Anaplasma marginale (strain St. Maries).